Reading from the N-terminus, the 611-residue chain is Pescadillo homolog (611 aa).

The disordered stretch occupies residues 310 to 335 (VQMGDPDEASPGEEEQFVAHASKSAP). Acidic residues predominate over residues 314-325 (DPDEASPGEEEQ). In terms of domain architecture, BRCT spans 354–455 (PSSRLFAPYT…KILLEDTYAQ (102 aa)). Disordered stretches follow at residues 469-506 (YEGA…ESNT) and 545-611 (VKKA…AGGK). Residues 482–498 (ADMDVETDGEEGEADAS) show a composition bias toward acidic residues. Basic and acidic residues-rich tracts occupy residues 552–569 (KKPD…KDMN) and 579–602 (KLYE…EQRK). Residues 580-609 (LYEKMKYSQQKKAAEKEKLEQRKKQLQKAG) adopt a coiled-coil conformation.

The protein belongs to the pescadillo family. Component of the NOP7 complex, composed of ERB1, NOP7 and YTM1. The complex is held together by ERB1, which interacts with NOP7 via its N-terminal domain and with YTM1 via a high-affinity interaction between the seven-bladed beta-propeller domains of the 2 proteins. The NOP7 complex associates with the 66S pre-ribosome.

Its subcellular location is the nucleus. It localises to the nucleolus. It is found in the nucleoplasm. Functionally, component of the NOP7 complex, which is required for maturation of the 25S and 5.8S ribosomal RNAs and formation of the 60S ribosome. The protein is Pescadillo homolog of Coprinopsis cinerea (strain Okayama-7 / 130 / ATCC MYA-4618 / FGSC 9003) (Inky cap fungus).